Here is a 427-residue protein sequence, read N- to C-terminus: GTPase Obg (427 aa).

The Obg domain occupies 1–158; it reads MFIDKAKIHL…LTVTLELKLI (158 aa). The region spanning 159–330 is the OBG-type G domain; the sequence is ADVGLVGFPN…LLDYVSIKLK (172 aa). GTP contacts are provided by residues 165–172, 190–194, 212–215, 282–285, and 311–313; these read GFPNVGKS, FTTLT, DIPG, NKTD, and SAA. Mg(2+)-binding residues include S172 and T192. The OCT domain maps to 347–427; the sequence is LYELKEKDTN…IYDVEFEYFH (81 aa).

Belongs to the TRAFAC class OBG-HflX-like GTPase superfamily. OBG GTPase family. As to quaternary structure, monomer. Mg(2+) serves as cofactor.

The protein resides in the cytoplasm. In terms of biological role, an essential GTPase which binds GTP, GDP and possibly (p)ppGpp with moderate affinity, with high nucleotide exchange rates and a fairly low GTP hydrolysis rate. Plays a role in control of the cell cycle, stress response, ribosome biogenesis and in those bacteria that undergo differentiation, in morphogenesis control. The protein is GTPase Obg of Alkaliphilus metalliredigens (strain QYMF).